The following is a 318-amino-acid chain: MANTLEQLKLYTTIVADTGDIEAIKRYQPEDATTNPSLILKAAQIPEYESLIDNAIDWAKSQSANLAQQLDDASDKLAVNIGVEILKLVPGRISTEVDARLSFDKEQSIAKAHKLVRLYQEAGVDKSRILIKLASTWEGICAARELEKEGINCNLTLLFSFAQARACAEAGAYLISPFVGRILDWYKKDTGKDYDAVNDPGVVSVTEIYNYYKQHGFNTVVMGASFRNIGEIIELAGCDRLTIGPSLLEELANSQIDITPKLVAATSTVAAEAPLTEAQFRWDFNQDPMAVDKLAEGIRNFAIDQGKLEVMLTAKLAN.

The Schiff-base intermediate with substrate role is filled by Lys-132.

The protein belongs to the transaldolase family. Type 1 subfamily. In terms of assembly, homodimer.

The protein resides in the cytoplasm. The enzyme catalyses D-sedoheptulose 7-phosphate + D-glyceraldehyde 3-phosphate = D-erythrose 4-phosphate + beta-D-fructose 6-phosphate. It functions in the pathway carbohydrate degradation; pentose phosphate pathway; D-glyceraldehyde 3-phosphate and beta-D-fructose 6-phosphate from D-ribose 5-phosphate and D-xylulose 5-phosphate (non-oxidative stage): step 2/3. In terms of biological role, transaldolase is important for the balance of metabolites in the pentose-phosphate pathway. In Shewanella baltica (strain OS155 / ATCC BAA-1091), this protein is Transaldolase.